The following is a 211-amino-acid chain: Suppressor of RNA silencing p3 (211 aa).

The protein belongs to the tenuiviruses p3 protein family. In terms of assembly, homodimer.

It is found in the host cytoplasm. Its function is as follows. Acts as a suppressor of RNA-mediated gene silencing, also known as post-transcriptional gene silencing (PTGS), presumably through the binding of dsRNA. The polypeptide is Suppressor of RNA silencing p3 (Avena sativa (Oat)).